Reading from the N-terminus, the 621-residue chain is Chaperone protein HscA homolog (621 aa).

This sequence belongs to the heat shock protein 70 family.

In terms of biological role, chaperone involved in the maturation of iron-sulfur cluster-containing proteins. Has a low intrinsic ATPase activity which is markedly stimulated by HscB. In Cupriavidus pinatubonensis (strain JMP 134 / LMG 1197) (Cupriavidus necator (strain JMP 134)), this protein is Chaperone protein HscA homolog.